The sequence spans 83 residues: U5-theraphotoxin-Hs1a 4 (83 aa).

The N-terminal stretch at 1-21 (MKTSMFLTLTGLVLLFVDCYA) is a signal peptide. The propeptide occupies 22-49 (SESEEKEFPKELLSSIFAADSDFKVEER). Disulfide bonds link Cys51-Cys63, Cys56-Cys68, and Cys62-Cys75.

The protein belongs to the neurotoxin 10 (Hwtx-1) family. 51 (Hntx-8) subfamily. Hntx-8 sub-subfamily. In terms of tissue distribution, expressed by the venom gland.

It is found in the secreted. Its function is as follows. Agglutinates erythrocytes. The protein is U5-theraphotoxin-Hs1a 4 of Cyriopagopus schmidti (Chinese bird spider).